The primary structure comprises 427 residues: MTTTTTAPALPTPIHDGLGNGTTYERSIPRPVNPFSNRVPGREIITVPNFTLESGVEMRNVPVAYMSWGKLSPKANNVMIICHALSGSADVSDWWGPLLGPGKAFDTDKFFVICMNSLGSPYGTASPVTAKNGDYSEGWYGADFPATTIRDDVRLHKLVLDRLGVRKVAAVIGGSMGGMHVLEWAFFGKDYVRCIVPAATSSHQSAWAIGWGEAQRHAIRSDVKYKNGRYGFDDPPILGLEAARMTALLTYRSRDSLERRFGRDTGNKKKAKNKGSETLPSNSTPIHSQGGADETPVAFDRADSNFAAQSYLRYQAKKFSDRFDSNCYIALTNKLDTHDLARGRTRTITEALSLIEQPTLVLGIRSDGLYTLAEQEQIARTVPNAKLREIVSDDGHDAFLIEWSQLNWLLVGFLHESLPDIMQRAAL.

The span at 1–13 (MTTTTTAPALPTP) shows a compositional bias: low complexity. The tract at residues 1 to 35 (MTTTTTAPALPTPIHDGLGNGTTYERSIPRPVNPF) is disordered. Residues 77–400 (NVMIICHALS…VSDDGHDAFL (324 aa)) enclose the AB hydrolase-1 domain. The active-site Nucleophile is the serine 175. Positions 260 to 297 (RFGRDTGNKKKAKNKGSETLPSNSTPIHSQGGADETPV) are disordered. A compositionally biased stretch (polar residues) spans 276 to 287 (SETLPSNSTPIH). Catalysis depends on residues aspartate 367 and histidine 396.

This sequence belongs to the AB hydrolase superfamily. MetX family.

It carries out the reaction L-homoserine + acetyl-CoA = O-acetyl-L-homoserine + CoA. Its pathway is mycotoxin biosynthesis. In terms of biological role, homoserine O-acetyltransferase; part of the gene cluster that mediates the biosynthesis of fusaric acid, a mycotoxin with low to moderate toxicity to animals and humans, but with high phytotoxic properties. L-aspartate is suggested as fusaric acid amino acid precursor that is activated and further processed to O-acetyl-L-homoserine by cluster enzymes aspartate kinase FUB3 and homoserine O-acetyltransferase FUB5, as well as enzymes of the primary metabolism. The polyketide synthase (PKS) FUB1 generates the triketide trans-2-hexenal which is presumptively released by the hydrolase FUB4 and linked to the NRPS-bound amino acid precursor by NAD(P)-dependent dehydrogenase FUB6. FUB1, FUB4, and the non-canonical NRPS Fub8 may form an enzyme complex. Further processing of the NRPS-bound intermediate might be carried out by FUB6 and the sulfhydrylase FUB7, enabling a spontaneous electrocyclization to close the carbon backbone of fusaric acid. Dihydrofusaric acid is likely to be released via reduction by the thioester reductase (TR) domain of FUB8 whereupon the final oxidation to fusaric acid may (also) be performed by the FMN-dependent dehydrogenase FUB9. This chain is Homoserine O-acetyltransferase FUB5, found in Gibberella fujikuroi (strain CBS 195.34 / IMI 58289 / NRRL A-6831) (Bakanae and foot rot disease fungus).